Here is a 290-residue protein sequence, read N- to C-terminus: Probable endonuclease 4 (290 aa).

His-66, His-106, Glu-143, Asp-179, His-182, His-216, Asp-229, His-231, and Glu-261 together coordinate Zn(2+).

It belongs to the AP endonuclease 2 family. Zn(2+) is required as a cofactor.

It catalyses the reaction Endonucleolytic cleavage to 5'-phosphooligonucleotide end-products.. Its function is as follows. Endonuclease IV plays a role in DNA repair. It cleaves phosphodiester bonds at apurinic or apyrimidinic (AP) sites, generating a 3'-hydroxyl group and a 5'-terminal sugar phosphate. This chain is Probable endonuclease 4, found in Solibacter usitatus (strain Ellin6076).